Reading from the N-terminus, the 185-residue chain is Ribosome-recycling factor (185 aa).

This sequence belongs to the RRF family.

Its subcellular location is the cytoplasm. Responsible for the release of ribosomes from messenger RNA at the termination of protein biosynthesis. May increase the efficiency of translation by recycling ribosomes from one round of translation to another. The polypeptide is Ribosome-recycling factor (Novosphingobium aromaticivorans (strain ATCC 700278 / DSM 12444 / CCUG 56034 / CIP 105152 / NBRC 16084 / F199)).